The following is a 431-amino-acid chain: MPAIVLIGAQWGDEGKGKATDLLGGRVQWVVRYQGGNNAGHTVVLPTGENFALHLIPSGILTPGVTNVIGNGVVVDPGVLLAELKGLEERGVDTERLLISADAHLLMPYHVAIDKVVERYAGSKKIGTTGRGIGPCYQDKIARQGIRVADVLDPALLAEKIEGALELKNQVLVKIYNRKALDPAEVVENLLEQADGFKHRIADARLLLNEALERNETVLLEGSQGTLLDVDHGTYPFVTSSNPTAGGASVGSGIGPTRITTVLGILKAYTTRVGSGPFPTELFDDHGAYLAKTGGEVGVTTGRARRCGWFDAVIARYATRVNGITDYFLTKLDVLSSLETVPICVGYSVDGKRTDEMPMTQSDIARAEPIYEELPGWWEDISGCRTFDELPAKARDYVLRLEDLAGAHVSCIGVGPGRDQTIVRRDVLAAR.

GTP contacts are provided by residues Gly-12 to Lys-18 and Gly-40 to Thr-42. Catalysis depends on Asp-13, which acts as the Proton acceptor. Residues Asp-13 and Gly-40 each contribute to the Mg(2+) site. Residues Asp-13–Lys-16, Asn-38–His-41, Thr-129, Arg-143, Gln-224, Thr-239, and Arg-303 contribute to the IMP site. His-41 serves as the catalytic Proton donor. Position 299–305 (Val-299–Arg-305) interacts with substrate. GTP contacts are provided by residues Arg-305, Lys-331 to Asp-333, and Gly-413 to Gly-415.

This sequence belongs to the adenylosuccinate synthetase family. In terms of assembly, homodimer. Mg(2+) serves as cofactor.

It localises to the cytoplasm. The enzyme catalyses IMP + L-aspartate + GTP = N(6)-(1,2-dicarboxyethyl)-AMP + GDP + phosphate + 2 H(+). It functions in the pathway purine metabolism; AMP biosynthesis via de novo pathway; AMP from IMP: step 1/2. Plays an important role in the de novo pathway of purine nucleotide biosynthesis. Catalyzes the first committed step in the biosynthesis of AMP from IMP. This is Adenylosuccinate synthetase from Mycolicibacterium vanbaalenii (strain DSM 7251 / JCM 13017 / BCRC 16820 / KCTC 9966 / NRRL B-24157 / PYR-1) (Mycobacterium vanbaalenii).